The sequence spans 474 residues: Cell division protein FtsP (474 aa).

The tat-type signal signal peptide spans 1–27; sequence MSLSRRQFIQAAGLALGAGSLPLRAQA. One can recognise a Plastocyanin-like domain in the interval 229–288; sequence WVRLRLLNASNARRYTLQLSDGRPLYVVASDQGFLPAPVAVQQLSLAPGERREVVIDMSQ.

It belongs to the FtsP family. In terms of processing, predicted to be exported by the Tat system. The position of the signal peptide cleavage has not been experimentally proven.

Its subcellular location is the periplasm. Its function is as follows. Cell division protein that is required for growth during stress conditions. May be involved in protecting or stabilizing the divisomal assembly under conditions of stress. This is Cell division protein FtsP from Yersinia pestis.